A 436-amino-acid polypeptide reads, in one-letter code: Trigger factor (436 aa).

Residues 164–249 enclose the PPIase FKBP-type domain; it reads GDTVVIDFEG…IHEVKTKELP (86 aa).

Belongs to the FKBP-type PPIase family. Tig subfamily.

The protein localises to the cytoplasm. It catalyses the reaction [protein]-peptidylproline (omega=180) = [protein]-peptidylproline (omega=0). Involved in protein export. Acts as a chaperone by maintaining the newly synthesized protein in an open conformation. Functions as a peptidyl-prolyl cis-trans isomerase. The polypeptide is Trigger factor (Ligilactobacillus salivarius (strain UCC118) (Lactobacillus salivarius)).